A 349-amino-acid chain; its full sequence is RxLR effector protein CRE15 (349 aa).

Positions 1 to 33 (MITFKRLSSARWGALLTSIAVLFFLAITKGADA) are cleaved as a signal peptide. The RxLR-dEER signature appears at 46–62 (RRLRTTTADAYYASEDR).

This sequence belongs to the RxLR effector family. As to quaternary structure, interacts directly with the potato ortholog of vascular highway 1 (VH1)-interacting kinase (VIK), encoding a predicted MEK kinase (MAP3K).

The protein resides in the secreted. It localises to the host cell membrane. Effector that promotes P.infestans virulence in Nicotiana benthamiana and potato. Attenuates cell death triggered by the pathogen-associated molecular pattern infestin 1 (INF1), indicating that the effector suppresses pattern-triggered immunity. However, it does not attenuate cell death triggered by a range of resistance proteins, suggesting that it specifically suppresses INF1-triggered cell death (ICD). Targets host MAP3K VIK in order to utilize or promote its ability to negatively regulate immunity. The protein is RxLR effector protein CRE15 of Phytophthora infestans (strain T30-4) (Potato late blight agent).